Consider the following 63-residue polypeptide: DNA gyrase inhibitor YacG (63 aa).

Zn(2+) is bound by residues C10, C13, C29, and C33.

This sequence belongs to the DNA gyrase inhibitor YacG family. In terms of assembly, interacts with GyrB. Zn(2+) is required as a cofactor.

Inhibits all the catalytic activities of DNA gyrase by preventing its interaction with DNA. Acts by binding directly to the C-terminal domain of GyrB, which probably disrupts DNA binding by the gyrase. The polypeptide is DNA gyrase inhibitor YacG (Chromobacterium violaceum (strain ATCC 12472 / DSM 30191 / JCM 1249 / CCUG 213 / NBRC 12614 / NCIMB 9131 / NCTC 9757 / MK)).